Consider the following 1451-residue polypeptide: Murinoglobulin-2 (1451 aa).

Positions 1-27 (MWKSRRAQLCLFSVLLAFLPSASSLNG) are cleaved as a signal peptide. Intrachain disulfides connect C48–C86, C251–C276, and C269–C288. N55 is a glycosylation site (N-linked (GlcNAc...) asparagine). N-linked (GlcNAc...) asparagine glycosylation is found at N294, N313, and N500. 3 disulfide bridges follow: C461–C555, C587–C773, and C634–C680. The bait region stretch occupies residues 677–734 (PKICFDSAPMSGPRGKFDLAFSSEVSGTLQKGSSKRPQPEEPPREDPPPKDPLAETIR). The interval 703–728 (GTLQKGSSKRPQPEEPPREDPPPKDP) is disordered. Over residues 713–728 (PQPEEPPREDPPPKDP) the composition is skewed to basic and acidic residues. N-linked (GlcNAc...) asparagine glycosylation is found at N749, N776, and N871. 4 disulfides stabilise this stretch: C849–C885, C923–C1274, C1081–C1104, and C1298–C1444. A cross-link (isoglutamyl cysteine thioester (Cys-Gln)) is located at residues 974–977 (CGEQ). A glycan (N-linked (GlcNAc...) asparagine) is linked at N1401.

The protein belongs to the protease inhibitor I39 (alpha-2-macroglobulin) family. Monomer. Plasma.

Its subcellular location is the secreted. Its function is as follows. A proteinase activates the inhibitor by specific proteolysis in the bait region, which, by an unknown mechanism leads to reaction at the cysteinyl-glutamyl internal thiol ester site and to a conformational change, whereby the proteinase is trapped and/or covalently bound to the inhibitor. While in the tetrameric proteinase inhibitors steric inhibition is sufficiently strong, monomeric forms need a covalent linkage between the activated glutamyl residue of the original thiol ester and a terminal amino group of a lysine or another nucleophilic group on the proteinase, for inhibition to be effective. This is Murinoglobulin-2 (Mug2) from Mus musculus (Mouse).